Here is a 105-residue protein sequence, read N- to C-terminus: Large ribosomal subunit protein uL24 (105 aa).

Belongs to the universal ribosomal protein uL24 family. As to quaternary structure, part of the 50S ribosomal subunit.

Functionally, one of two assembly initiator proteins, it binds directly to the 5'-end of the 23S rRNA, where it nucleates assembly of the 50S subunit. In terms of biological role, one of the proteins that surrounds the polypeptide exit tunnel on the outside of the subunit. This chain is Large ribosomal subunit protein uL24, found in Xanthomonas axonopodis pv. citri (strain 306).